Here is a 117-residue protein sequence, read N- to C-terminus: uncharacterized protein (117 aa).

A helical transmembrane segment spans residues 4-26 (VLNFHFSYIYTYFITITTNYKYG).

The protein localises to the host membrane. This is an uncharacterized protein from Sulfolobus islandicus rod-shaped virus 1 (SIRV-1).